The chain runs to 162 residues: Interleukin-15 (162 aa).

The first 29 residues, 1–29 (MRILKPYLRSTSIQCYLCLLLNSHFLTEA), serve as a signal peptide directing secretion. A propeptide spanning residues 30-48 (GIHVFILGCISASLPKTEA) is cleaved from the precursor. 2 disulfides stabilise this stretch: Cys83–Cys133 and Cys90–Cys136. Asn104, Asn113, Asn121, and Asn127 each carry an N-linked (GlcNAc...) asparagine glycan.

It belongs to the IL-15/IL-21 family.

The protein resides in the secreted. Cytokine that plays a major role in the development of inflammatory and protective immune responses to microbial invaders and parasites by modulating immune cells of both the innate and adaptive immune systems. Stimulates the proliferation of natural killer cells, T-cells and B-cells and promotes the secretion of several cytokines. In monocytes, induces the production of IL8 and monocyte chemotactic protein 1/CCL2, two chemokines that attract neutrophils and monocytes respectively to sites of infection. Unlike most cytokines, which are secreted in soluble form, IL15 is expressed in association with its high affinity IL15RA on the surface of IL15-producing cells and delivers signals to target cells that express IL2RB and IL2RG receptor subunits. Binding to its receptor triggers the phosphorylation of JAK1 and JAK3 and the recruitment and subsequent phosphorylation of signal transducer and activator of transcription-3/STAT3 and STAT5. In mast cells, induces the rapid tyrosine phosphorylation of STAT6 and thereby controls mast cell survival and release of cytokines such as IL4. This is Interleukin-15 (IL15) from Bos taurus (Bovine).